The chain runs to 501 residues: MAAAALLLLAAAAAAVVVAMALRWLLLLGGPAAGRQGKRARMPPGSTGLPLIGETLRLISAYKTPNPEPFIDERVARHGGVFTTHVFGERTVFSADPAFNRLLLAAEGRAVHSSYPSSIATLLGARSLLLTRGAAHKRLHSLTLTRLGRPASPPLLAHIDRLVLATMRQWEPAATVRLMDEAKKITFNLTVKQLVSIEPGPWTESLRREYVKLIDGFFSIPFPLACLLPFTTYGQALKARKKVAGALREVIKKRMEEKAENGGSIGDDEGKKEKKDMVEELLQAEGGSFSEEEMVDFCLSLLVAGYETTSVLMTLAVKFLTETPAALAELKEEHANIRDMKGKNQPLEWSDYKSMPFTQCVINETLRVGNIISGVFRRANTDIHYKDYTIPKGCKIFASFRAVHLNNEHYENARTFNPWRWQINNKLQNAVGANIFTPFGGGPRLCPGYELARVVVSIFLHHLVTRFSWEETEEDRLVFFPTTRTLKGYPINLRLLSESIC.

A helical membrane pass occupies residues 2-22 (AAAALLLLAAAAAAVVVAMAL). Position 446 (Cys-446) interacts with heme.

The protein belongs to the cytochrome P450 family. The cofactor is heme.

Its subcellular location is the membrane. Its pathway is plant hormone biosynthesis; brassinosteroid biosynthesis. Its function is as follows. Catalyzes the C23-alpha-hydroxylation step in brassinosteroid biosynthesis. Converts 6-deoxocathasterone to 6-deoxoteasterone in the late C6-oxidation pathway and cathasterone to teasterone (TE) in the early C6-oxidation pathway of brassinolide (BL) biosynthesis. This Oryza sativa subsp. indica (Rice) protein is Cytochrome P450 90A4.